Consider the following 352-residue polypeptide: Isoflavone-7-O-methyltransferase 8 (352 aa).

Residue 118–127 participates in substrate binding; that stretch reads VLDPTLSGSY. Residues Gly-196, Asp-219, Asp-239, Met-240, and Lys-253 each contribute to the S-adenosyl-L-methionine site. His-257 (proton acceptor) is an active-site residue.

Belongs to the class I-like SAM-binding methyltransferase superfamily. Cation-independent O-methyltransferase family. COMT subfamily. As to quaternary structure, homodimer.

It carries out the reaction a 7-hydroxyisoflavone + S-adenosyl-L-methionine = a 7-methoxyisoflavone + S-adenosyl-L-homocysteine + H(+). The protein operates within phytoalexin biosynthesis; medicarpin biosynthesis. Functionally, transfers a methyl group to 7-hydroxyls of the isoflavones daidzein, genistein and 6,7,4'-trihydroxyisoflavone. Can also methylate (+)6a-hydroxymaackiain with lower efficiency. In Medicago sativa (Alfalfa), this protein is Isoflavone-7-O-methyltransferase 8.